A 652-amino-acid chain; its full sequence is Chaperone protein HtpG (652 aa).

The interval 1 to 348 (MATDAHKETL…SDDLPLNVSR (348 aa)) is a; substrate-binding. A b region spans residues 349–565 (ELLQHNPLLD…EYDFGMGMQR (217 aa)). Positions 566–652 (LLKAAGHAMP…EAKSNAARGD (87 aa)) are c.

Belongs to the heat shock protein 90 family. Homodimer.

It is found in the cytoplasm. In terms of biological role, molecular chaperone. Has ATPase activity. The sequence is that of Chaperone protein HtpG from Alkalilimnicola ehrlichii (strain ATCC BAA-1101 / DSM 17681 / MLHE-1).